The sequence spans 86 residues: Protein Tat (86 aa).

The tract at residues 1 to 24 (MEPVDPRLEPWKHPGSQPKTACTN) is interaction with human CREBBP. The transactivation stretch occupies residues 1–48 (MEPVDPRLEPWKHPGSQPKTACTNCYCKKCCFHCQVCFITKALGISYG). Residues C22, C25, and C27 each contribute to the Zn(2+) site. The segment at 22 to 37 (CTNCYCKKCCFHCQVC) is cysteine-rich. Position 28 is an N6-acetyllysine; by host PCAF (K28). C30, H33, C34, and C37 together coordinate Zn(2+). Residues 38–48 (FITKALGISYG) form a core region. Residues 48 to 58 (GRKKRRQRRRA) show a composition bias toward basic residues. The segment at 48-86 (GRKKRRQRRRAPQGSQTHQVSLSKQPTSQSRGDPTGPKE) is disordered. The Nuclear localization signal, RNA-binding (TAR), and protein transduction signature appears at 49 to 57 (RKKRRQRRR). The tract at residues 49–86 (RKKRRQRRRAPQGSQTHQVSLSKQPTSQSRGDPTGPKE) is interaction with the host capping enzyme RNGTT. Residues K50 and K51 each carry the N6-acetyllysine; by host EP300 and GCN5L2 modification. 2 positions are modified to asymmetric dimethylarginine; by host PRMT6: R52 and R53. A compositionally biased stretch (polar residues) spans 60–79 (QGSQTHQVSLSKQPTSQSRG). Residue K71 forms a Glycyl lysine isopeptide (Lys-Gly) (interchain with G-Cter in ubiquitin) linkage. Residues 78 to 80 (RGD) carry the Cell attachment site motif.

This sequence belongs to the lentiviruses Tat family. As to quaternary structure, interacts with host CCNT1. Associates with the P-TEFb complex composed at least of Tat, P-TEFb (CDK9 and CCNT1), TAR RNA, RNA Pol II. Recruits the HATs CREBBP, TAF1/TFIID, EP300, PCAF and GCN5L2. Interacts with host KAT5/Tip60; this interaction targets the latter to degradation. Interacts with the host deacetylase SIRT1. Interacts with host capping enzyme RNGTT; this interaction stimulates RNGTT. Binds to host KDR, and to the host integrins ITGAV/ITGB3 and ITGA5/ITGB1. Interacts with host KPNB1/importin beta-1 without previous binding to KPNA1/importin alpha-1. Interacts with EIF2AK2. Interacts with host nucleosome assembly protein NAP1L1; this interaction may be required for the transport of Tat within the nucleus, since the two proteins interact at the nuclear rim. Interacts with host C1QBP/SF2P32; this interaction involves lysine-acetylated Tat. Interacts with the host chemokine receptors CCR2, CCR3 and CXCR4. Interacts with host DPP4/CD26; this interaction may trigger an anti-proliferative effect. Interacts with host LDLR. Interacts with the host extracellular matrix metalloproteinase MMP1. Interacts with host PRMT6; this interaction mediates Tat's methylation. Interacts with, and is ubiquitinated by MDM2/Hdm2. Interacts with host PSMC3 and HTATIP2. Interacts with STAB1; this interaction may overcome SATB1-mediated repression of IL2 and IL2RA (interleukin) in T cells by binding to the same domain than HDAC1. Interacts (when acetylated) with human CDK13, thereby increasing HIV-1 mRNA splicing and promoting the production of the doubly spliced HIV-1 protein Nef. Interacts with host TBP; this interaction modulates the activity of transcriptional pre-initiation complex. Interacts with host RELA. Interacts with host PLSCR1; this interaction negatively regulates Tat transactivation activity by altering its subcellular distribution. Post-translationally, asymmetrical arginine methylation by host PRMT6 seems to diminish the transactivation capacity of Tat and affects the interaction with host CCNT1. Acetylation by EP300, CREBBP, GCN5L2/GCN5 and PCAF regulates the transactivation activity of Tat. EP300-mediated acetylation of Lys-50 promotes dissociation of Tat from the TAR RNA through the competitive binding to PCAF's bromodomain. In addition, the non-acetylated Tat's N-terminus can also interact with PCAF. PCAF-mediated acetylation of Lys-28 enhances Tat's binding to CCNT1. Lys-50 is deacetylated by SIRT1. In terms of processing, polyubiquitination by host MDM2 does not target Tat to degradation, but activates its transactivation function and fosters interaction with CCNT1 and TAR RNA. Post-translationally, phosphorylated by EIF2AK2 on serine and threonine residues adjacent to the basic region important for TAR RNA binding and function. Phosphorylation of Tat by EIF2AK2 is dependent on the prior activation of EIF2AK2 by dsRNA.

It localises to the host nucleus. The protein resides in the host nucleolus. It is found in the host cytoplasm. The protein localises to the secreted. Transcriptional activator that increases RNA Pol II processivity, thereby increasing the level of full-length viral transcripts. Recognizes a hairpin structure at the 5'-LTR of the nascent viral mRNAs referred to as the transactivation responsive RNA element (TAR) and recruits the cyclin T1-CDK9 complex (P-TEFb complex) that will in turn hyperphosphorylate the RNA polymerase II to allow efficient elongation. The CDK9 component of P-TEFb and other Tat-activated kinases hyperphosphorylate the C-terminus of RNA Pol II that becomes stabilized and much more processive. Other factors such as HTATSF1/Tat-SF1, SUPT5H/SPT5, and HTATIP2 are also important for Tat's function. Besides its effect on RNA Pol II processivity, Tat induces chromatin remodeling of proviral genes by recruiting the histone acetyltransferases (HATs) CREBBP, EP300 and PCAF to the chromatin. This also contributes to the increase in proviral transcription rate, especially when the provirus integrates in transcriptionally silent region of the host genome. To ensure maximal activation of the LTR, Tat mediates nuclear translocation of NF-kappa-B by interacting with host RELA. Through its interaction with host TBP, Tat may also modulate transcription initiation. Tat can reactivate a latently infected cell by penetrating in it and transactivating its LTR promoter. In the cytoplasm, Tat is thought to act as a translational activator of HIV-1 mRNAs. Its function is as follows. Extracellular circulating Tat can be endocytosed by surrounding uninfected cells via the binding to several surface receptors such as CD26, CXCR4, heparan sulfate proteoglycans (HSPG) or LDLR. Neurons are rarely infected, but they internalize Tat via their LDLR. Through its interaction with nuclear HATs, Tat is potentially able to control the acetylation-dependent cellular gene expression. Modulates the expression of many cellular genes involved in cell survival, proliferation or in coding for cytokines or cytokine receptors. Tat plays a role in T-cell and neurons apoptosis. Tat induced neurotoxicity and apoptosis probably contribute to neuroAIDS. Circulating Tat also acts as a chemokine-like and/or growth factor-like molecule that binds to specific receptors on the surface of the cells, affecting many cellular pathways. In the vascular system, Tat binds to ITGAV/ITGB3 and ITGA5/ITGB1 integrins dimers at the surface of endothelial cells and competes with bFGF for heparin-binding sites, leading to an excess of soluble bFGF. The chain is Protein Tat from Human immunodeficiency virus type 1 group M subtype B (isolate PCV12) (HIV-1).